A 146-amino-acid polypeptide reads, in one-letter code: Stress-responsive DNAJB4-interacting membrane protein 1 (146 aa).

Residues 1-26 form the signal peptide; sequence MWPAPCSVGRLLIFFMCSSSGYVVQG. Residues 27–66 lie on the Extracellular side of the membrane; sequence CGPSPGARTTLGSPLSLWSIKTPSHIFCTRRAINLGFPSP. The helical transmembrane segment at 67 to 87 threads the bilayer; sequence PLVQLIFWSLNAGLDLYLCLI. The Cytoplasmic portion of the chain corresponds to 88–94; sequence SSCGFSQ. Residues 95-115 form a helical membrane-spanning segment; it reads VFWPVEAFCSFSLSFFALALS. Topologically, residues 116-146 are extracellular; it reads HKFVICRLDQHIFSGFTKSLKNLPPCHRTDI.

As to quaternary structure, homodimer. Interacts with DNAJB4. As to expression, expressed in brain with higher detection in neurons than astrocytes. Decreased expression in Alzheimer brains. Detected at protein level in brain and cervix.

Its subcellular location is the membrane. Functionally, promotes neuronal cells survival to stress conditions. The chain is Stress-responsive DNAJB4-interacting membrane protein 1 (SDIM1) from Homo sapiens (Human).